Here is a 472-residue protein sequence, read N- to C-terminus: ATP synthase subunit beta (472 aa).

160-167 (GGAGVGKT) is an ATP binding site.

Belongs to the ATPase alpha/beta chains family. F-type ATPases have 2 components, CF(1) - the catalytic core - and CF(0) - the membrane proton channel. CF(1) has five subunits: alpha(3), beta(3), gamma(1), delta(1), epsilon(1). CF(0) has three main subunits: a(1), b(2) and c(9-12). The alpha and beta chains form an alternating ring which encloses part of the gamma chain. CF(1) is attached to CF(0) by a central stalk formed by the gamma and epsilon chains, while a peripheral stalk is formed by the delta and b chains.

It localises to the cell membrane. The catalysed reaction is ATP + H2O + 4 H(+)(in) = ADP + phosphate + 5 H(+)(out). Functionally, produces ATP from ADP in the presence of a proton gradient across the membrane. The catalytic sites are hosted primarily by the beta subunits. This Lachnoclostridium phytofermentans (strain ATCC 700394 / DSM 18823 / ISDg) (Clostridium phytofermentans) protein is ATP synthase subunit beta.